A 904-amino-acid polypeptide reads, in one-letter code: Nitrate reductase [NADH] 1 (904 aa).

Polar residues-rich tracts occupy residues 1–10 (MAASVENRQF) and 39–50 (STNFQKKPNSTI). Residues 1 to 65 (MAASVENRQF…SSEDDDDDDE (65 aa)) form a disordered region. Residues 56 to 65 (SSEDDDDDDE) are compositionally biased toward acidic residues. C183 lines the Mo-molybdopterin pocket. The Cytochrome b5 heme-binding domain maps to 531 to 606 (SKMYSMSEVR…LEEFRIGELL (76 aa)). Residues H566 and H589 each contribute to the heme site. In terms of domain architecture, FAD-binding FR-type spans 647-759 (REKIPCKLID…KGPLGHIEYQ (113 aa)). Residues 699 to 702 (RAYT), 716 to 720 (VVKIY), F721, F728, 733 to 735 (QMS), and T786 contribute to the FAD site.

The protein belongs to the nitrate reductase family. Homodimer. The cofactor is FAD. Heme serves as cofactor. Requires Mo-molybdopterin as cofactor.

The catalysed reaction is nitrite + NAD(+) + H2O = nitrate + NADH + H(+). Regulated by the nitrogen source and controlled by the circadian rhythm. Nitrate reductase is a key enzyme involved in the first step of nitrate assimilation in plants, fungi and bacteria. This chain is Nitrate reductase [NADH] 1 (NIA1), found in Nicotiana tabacum (Common tobacco).